The chain runs to 1295 residues: Phosphoribosylformylglycinamidine synthase (1295 aa).

The disordered stretch occupies residues 305-327 (WPGAATGSGGEIRDEGATGRGAK). Residues 307–318 (GAATGSGGEIRD) and A678 each bind ATP. Residues E718, N722, and D884 each coordinate Mg(2+). S886 contacts ATP. One can recognise a Glutamine amidotransferase type-1 domain in the interval 1042 to 1295 (VAVLREQGVN…IFRNARKQLG (254 aa)). Catalysis depends on C1135, which acts as the Nucleophile. Active-site residues include H1260 and E1262.

This sequence in the N-terminal section; belongs to the FGAMS family. Monomer.

Its subcellular location is the cytoplasm. The catalysed reaction is N(2)-formyl-N(1)-(5-phospho-beta-D-ribosyl)glycinamide + L-glutamine + ATP + H2O = 2-formamido-N(1)-(5-O-phospho-beta-D-ribosyl)acetamidine + L-glutamate + ADP + phosphate + H(+). The protein operates within purine metabolism; IMP biosynthesis via de novo pathway; 5-amino-1-(5-phospho-D-ribosyl)imidazole from N(2)-formyl-N(1)-(5-phospho-D-ribosyl)glycinamide: step 1/2. Its function is as follows. Phosphoribosylformylglycinamidine synthase involved in the purines biosynthetic pathway. Catalyzes the ATP-dependent conversion of formylglycinamide ribonucleotide (FGAR) and glutamine to yield formylglycinamidine ribonucleotide (FGAM) and glutamate. The chain is Phosphoribosylformylglycinamidine synthase from Shigella boydii serotype 4 (strain Sb227).